Consider the following 142-residue polypeptide: Universal stress protein C (142 aa).

Belongs to the universal stress protein A family.

It is found in the cytoplasm. In terms of biological role, required for resistance to DNA-damaging agents. This Escherichia coli (strain K12) protein is Universal stress protein C (uspC).